We begin with the raw amino-acid sequence, 364 residues long: GDSL esterase/lipase At1g29660 (364 aa).

A signal peptide spans 1–26 (MESYLRKWCLVSVWVLLLGLGFKVKA). Ser39 (nucleophile) is an active-site residue. Residues Asp328 and His331 each act as charge relay system in the active site.

This sequence belongs to the 'GDSL' lipolytic enzyme family. Found in phloem exudates.

It localises to the secreted. It is found in the extracellular space. The protein localises to the apoplast. In terms of biological role, involved in EDS1-dependent systemic acquired resistance, maybe in phloem-mediated long-distance signaling. In Arabidopsis thaliana (Mouse-ear cress), this protein is GDSL esterase/lipase At1g29660.